The chain runs to 293 residues: 33 kDa chaperonin (293 aa).

Cystine bridges form between Cys229/Cys231 and Cys262/Cys265.

Belongs to the HSP33 family. Under oxidizing conditions two disulfide bonds are formed involving the reactive cysteines. Under reducing conditions zinc is bound to the reactive cysteines and the protein is inactive.

The protein localises to the cytoplasm. In terms of biological role, redox regulated molecular chaperone. Protects both thermally unfolding and oxidatively damaged proteins from irreversible aggregation. Plays an important role in the bacterial defense system toward oxidative stress. The protein is 33 kDa chaperonin of Methylobacillus flagellatus (strain ATCC 51484 / DSM 6875 / VKM B-1610 / KT).